The chain runs to 369 residues: Anhydro-N-acetylmuramic acid kinase (369 aa).

ATP is bound at residue 12–19 (GTSMDGVD).

The protein belongs to the anhydro-N-acetylmuramic acid kinase family.

It catalyses the reaction 1,6-anhydro-N-acetyl-beta-muramate + ATP + H2O = N-acetyl-D-muramate 6-phosphate + ADP + H(+). Its pathway is amino-sugar metabolism; 1,6-anhydro-N-acetylmuramate degradation. It participates in cell wall biogenesis; peptidoglycan recycling. Functionally, catalyzes the specific phosphorylation of 1,6-anhydro-N-acetylmuramic acid (anhMurNAc) with the simultaneous cleavage of the 1,6-anhydro ring, generating MurNAc-6-P. Is required for the utilization of anhMurNAc either imported from the medium or derived from its own cell wall murein, and thus plays a role in cell wall recycling. The polypeptide is Anhydro-N-acetylmuramic acid kinase (Shewanella baltica (strain OS185)).